We begin with the raw amino-acid sequence, 255 residues long: tRNA (guanine-N(1)-)-methyltransferase (255 aa).

Residues G113 and 133–138 contribute to the S-adenosyl-L-methionine site; that span reads IGDYVL.

Belongs to the RNA methyltransferase TrmD family. As to quaternary structure, homodimer.

The protein localises to the cytoplasm. It catalyses the reaction guanosine(37) in tRNA + S-adenosyl-L-methionine = N(1)-methylguanosine(37) in tRNA + S-adenosyl-L-homocysteine + H(+). Specifically methylates guanosine-37 in various tRNAs. The sequence is that of tRNA (guanine-N(1)-)-methyltransferase from Klebsiella pneumoniae (strain 342).